Consider the following 652-residue polypeptide: MSRFNPSPVSLSVTLGLMFSASAFAQDATKTDETMVVTAAGYAQVIQNAPASISVISREDLESRYYRDVTDALKSVPGVTVTGGGDTTDISIRGMGSNYTLILVDGKRQTSRQTRPNSDGPGIEQGWLPPLQAIERIEVIRGPMSTLYGSDAIGGVINIITRKDQQQWSGNVQLSTVVQENRASGDEQSANFFVTGPLSDALSLQVYGQTTQRDEDEIEHGYGDKSLRSLTSKLNYQLNPDHQLQLEAGVSAQDRENNVGKSAQSSGCRGTCSNTDNQYRRNHVAVSHQGDWQDVGQSDTYLQYEENTNKSREMSIDNTVFKSTLVAPIGEHMLSFGVEGKHESLEDKTSNKISSRTHISNTQWAGFIEDEWALAEQFRLTFGGRLDHDKNYGSHFSPRVYGVWNLDPLWTVKGGVSTGFRAPQLREVTPDWGQVSGGGNIYGNPDLKPETSINKELSLMYSTGSGLAASLTAFHNDFKDKITRVACPANICTAGPNQWGAAPTYRVNIDEAETYGAEATLSLPITESVELSSSYTYTHSEQKSGNFAGRPLLQLPKHLFNANLSWQTTDRLNSWANLNYRGKEMQPEGGASNDDFIAPSYTFIDTGVTYALTDTATIKAAVYNLFDQEVNYAEYGYVEDGRRYWLGLDIAF.

Positions 1-25 (MSRFNPSPVSLSVTLGLMFSASAFA) are cleaved as a signal peptide. The TonB box signature appears at 33–40 (ETMVVTAA). The region spanning 45–162 (VIQNAPASIS…IGGVINIITR (118 aa)) is the TBDR plug domain. The region spanning 167–652 (QWSGNVQLST…RYWLGLDIAF (486 aa)) is the TBDR beta-barrel domain. The TonB C-terminal box signature appears at 635–652 (YGYVEDGRRYWLGLDIAF).

It belongs to the TonB-dependent receptor family.

The protein localises to the cell outer membrane. Its function is as follows. Involved in the initial step of iron uptake by binding ferric vibriobactin, an iron chelatin siderophore that allows V.cholerae to extract iron from the environment. The sequence is that of Iron-regulated outer membrane virulence protein (irgA) from Vibrio cholerae serotype O1 (strain ATCC 39315 / El Tor Inaba N16961).